The primary structure comprises 255 residues: Large ribosomal subunit protein uL2 (255 aa).

The tract at residues 201–229 (YAHPHGGGSHQQGGTPVKKNAPPGQKVGF) is disordered.

Belongs to the universal ribosomal protein uL2 family. In terms of assembly, part of the 50S ribosomal subunit. Forms a bridge to the 30S subunit in the 70S ribosome.

Functionally, one of the primary rRNA binding proteins. Required for association of the 30S and 50S subunits to form the 70S ribosome, for tRNA binding and peptide bond formation. It has been suggested to have peptidyltransferase activity; this is somewhat controversial. Makes several contacts with the 16S rRNA in the 70S ribosome. The polypeptide is Large ribosomal subunit protein uL2 (Caldivirga maquilingensis (strain ATCC 700844 / DSM 13496 / JCM 10307 / IC-167)).